A 66-amino-acid polypeptide reads, in one-letter code: U8-myrmicitoxin-Tb1a (66 aa).

Residues 1–26 (MKLSFLSLAFAVIFVMAIMYAPQVEA) form the signal peptide. A propeptide spanning residues 27–50 (KASADADADADAAASADALAKASA) is cleaved from the precursor.

In terms of tissue distribution, expressed by the venom gland.

The protein localises to the secreted. In vivo, this neurotoxin paralyzes about 50% of blowflies (L.caesar) one hour after intrathoracic injection, when tested at high doses (54 nmol/g). This Tetramorium bicarinatum (Tramp ant) protein is U8-myrmicitoxin-Tb1a.